A 179-amino-acid chain; its full sequence is ATP synthase subunit b (179 aa).

A helical transmembrane segment spans residues 29-48; sequence VINLAILIGVLVYFGRGVLG.

Belongs to the ATPase B chain family. As to quaternary structure, F-type ATPases have 2 components, F(1) - the catalytic core - and F(0) - the membrane proton channel. F(1) has five subunits: alpha(3), beta(3), gamma(1), delta(1), epsilon(1). F(0) has four main subunits: a(1), b(1), b'(1) and c(10-14). The alpha and beta chains form an alternating ring which encloses part of the gamma chain. F(1) is attached to F(0) by a central stalk formed by the gamma and epsilon chains, while a peripheral stalk is formed by the delta, b and b' chains.

It is found in the cellular thylakoid membrane. Functionally, f(1)F(0) ATP synthase produces ATP from ADP in the presence of a proton or sodium gradient. F-type ATPases consist of two structural domains, F(1) containing the extramembraneous catalytic core and F(0) containing the membrane proton channel, linked together by a central stalk and a peripheral stalk. During catalysis, ATP synthesis in the catalytic domain of F(1) is coupled via a rotary mechanism of the central stalk subunits to proton translocation. In terms of biological role, component of the F(0) channel, it forms part of the peripheral stalk, linking F(1) to F(0). The complex from the organism is particularly stable to disruption and remains functional after 6 hrs at 55 degrees Celsius. This Thermosynechococcus vestitus (strain NIES-2133 / IAM M-273 / BP-1) protein is ATP synthase subunit b.